Here is a 396-residue protein sequence, read N- to C-terminus: Ribosomal RNA large subunit methyltransferase I (396 aa).

The 80-residue stretch at S2 to R81 folds into the PUA domain.

The protein belongs to the methyltransferase superfamily. RlmI family.

The protein resides in the cytoplasm. It catalyses the reaction cytidine(1962) in 23S rRNA + S-adenosyl-L-methionine = 5-methylcytidine(1962) in 23S rRNA + S-adenosyl-L-homocysteine + H(+). Its function is as follows. Specifically methylates the cytosine at position 1962 (m5C1962) of 23S rRNA. The polypeptide is Ribosomal RNA large subunit methyltransferase I (Escherichia coli O157:H7).